Consider the following 120-residue polypeptide: UPF0102 protein Daro_0503 (120 aa).

Residues 1–20 (MQVKANDTTTARGREAEDRA) are disordered.

The protein belongs to the UPF0102 family.

The protein is UPF0102 protein Daro_0503 of Dechloromonas aromatica (strain RCB).